The following is a 469-amino-acid chain: Sulfate adenylyltransferase subunit 1 (469 aa).

A tr-type G domain is found at 22–224 (KDLMRFITCG…NMTWYPGSPL (203 aa)). The segment at 31–38 (GSVDDGKS) is G1. 31–38 (GSVDDGKS) is a GTP binding site. The G2 stretch occupies residues 89–93 (GITID). Residues 110-113 (DTPG) are G3. GTP-binding positions include 110–114 (DTPGH) and 165–168 (NKMD). The G4 stretch occupies residues 165–168 (NKMD). The segment at 202 to 204 (SAL) is G5.

Belongs to the TRAFAC class translation factor GTPase superfamily. Classic translation factor GTPase family. CysN/NodQ subfamily. Heterodimer composed of CysD, the smaller subunit, and CysN.

The enzyme catalyses sulfate + ATP + H(+) = adenosine 5'-phosphosulfate + diphosphate. It functions in the pathway sulfur metabolism; hydrogen sulfide biosynthesis; sulfite from sulfate: step 1/3. In terms of biological role, with CysD forms the ATP sulfurylase (ATPS) that catalyzes the adenylation of sulfate producing adenosine 5'-phosphosulfate (APS) and diphosphate, the first enzymatic step in sulfur assimilation pathway. APS synthesis involves the formation of a high-energy phosphoric-sulfuric acid anhydride bond driven by GTP hydrolysis by CysN coupled to ATP hydrolysis by CysD. The polypeptide is Sulfate adenylyltransferase subunit 1 (Psychromonas ingrahamii (strain DSM 17664 / CCUG 51855 / 37)).